A 228-amino-acid polypeptide reads, in one-letter code: Cytidylate kinase (228 aa).

10–18 lines the ATP pocket; it reads GPSGSGKGT.

This sequence belongs to the cytidylate kinase family. Type 1 subfamily.

It localises to the cytoplasm. The catalysed reaction is CMP + ATP = CDP + ADP. The enzyme catalyses dCMP + ATP = dCDP + ADP. In Acinetobacter baumannii (strain AB0057), this protein is Cytidylate kinase.